We begin with the raw amino-acid sequence, 380 residues long: Cytochrome b (380 aa).

The next 4 membrane-spanning stretches (helical) occupy residues 33–53 (FGSLLGLCLITQIATGLFLAM), 77–98 (WLIRNLHANGASFFFICIYLHI), 113–133 (WNVGVILLLLVMMTAFVGYVL), and 178–198 (FFAFHFLLPFIIAAATVIHLL). Residues histidine 83 and histidine 97 each contribute to the heme b site. Residues histidine 182 and histidine 196 each coordinate heme b. Histidine 201 contacts a ubiquinone. Transmembrane regions (helical) follow at residues 226–246 (YKDLLGFAALLIALTSLALFS), 288–308 (LGGVLALLFSILVLMLVPILH), 320–340 (ITQFLFWTLVADVIILTWIGG), and 347–367 (FIIIGQIASFLYFFLFLVLTP).

Belongs to the cytochrome b family. In terms of assembly, the cytochrome bc1 complex contains 3 respiratory subunits (MT-CYB, CYC1 and UQCRFS1), 2 core proteins (UQCRC1 and UQCRC2) and probably 6 low-molecular weight proteins. Heme b is required as a cofactor.

The protein localises to the mitochondrion inner membrane. Functionally, component of the ubiquinol-cytochrome c reductase complex (complex III or cytochrome b-c1 complex) that is part of the mitochondrial respiratory chain. The b-c1 complex mediates electron transfer from ubiquinol to cytochrome c. Contributes to the generation of a proton gradient across the mitochondrial membrane that is then used for ATP synthesis. In Dactyloptena peterseni (Starry flying gurnard), this protein is Cytochrome b (mt-cyb).